The chain runs to 330 residues: Ketol-acid reductoisomerase (NADP(+)) (330 aa).

Residues methionine 1 to threonine 181 enclose the KARI N-terminal Rossmann domain. Residues tyrosine 24–glutamine 27, arginine 47, serine 50, serine 52, and aspartate 82–glutamine 85 each bind NADP(+). Residue histidine 107 is part of the active site. Glycine 133 is a binding site for NADP(+). Residues serine 182–leucine 327 enclose the KARI C-terminal knotted domain. Mg(2+) contacts are provided by aspartate 190, glutamate 194, glutamate 226, and glutamate 230. Serine 251 provides a ligand contact to substrate.

The protein belongs to the ketol-acid reductoisomerase family. It depends on Mg(2+) as a cofactor.

The catalysed reaction is (2R)-2,3-dihydroxy-3-methylbutanoate + NADP(+) = (2S)-2-acetolactate + NADPH + H(+). It carries out the reaction (2R,3R)-2,3-dihydroxy-3-methylpentanoate + NADP(+) = (S)-2-ethyl-2-hydroxy-3-oxobutanoate + NADPH + H(+). It functions in the pathway amino-acid biosynthesis; L-isoleucine biosynthesis; L-isoleucine from 2-oxobutanoate: step 2/4. It participates in amino-acid biosynthesis; L-valine biosynthesis; L-valine from pyruvate: step 2/4. Its function is as follows. Involved in the biosynthesis of branched-chain amino acids (BCAA). Catalyzes an alkyl-migration followed by a ketol-acid reduction of (S)-2-acetolactate (S2AL) to yield (R)-2,3-dihydroxy-isovalerate. In the isomerase reaction, S2AL is rearranged via a Mg-dependent methyl migration to produce 3-hydroxy-3-methyl-2-ketobutyrate (HMKB). In the reductase reaction, this 2-ketoacid undergoes a metal-dependent reduction by NADPH to yield (R)-2,3-dihydroxy-isovalerate. This chain is Ketol-acid reductoisomerase (NADP(+)), found in Pelodictyon phaeoclathratiforme (strain DSM 5477 / BU-1).